Consider the following 206-residue polypeptide: Recombination protein RecR (206 aa).

A C4-type zinc finger spans residues 58–73; the sequence is CENCHNISDVAVCEIC. Residues 81–176 enclose the Toprim domain; the sequence is QIVCVVEDVR…ITSSIARGIS (96 aa).

Belongs to the RecR family.

May play a role in DNA repair. It seems to be involved in an RecBC-independent recombinational process of DNA repair. It may act with RecF and RecO. In Flavobacterium psychrophilum (strain ATCC 49511 / DSM 21280 / CIP 103535 / JIP02/86), this protein is Recombination protein RecR.